The chain runs to 1004 residues: Polyhomeotic-like protein 1 (1004 aa).

Residues Met1 to Ser22 show a composition bias toward low complexity. Disordered stretches follow at residues Met1–Pro24, Asn212–Ser241, Ser261–Arg355, Gln432–Ala512, Arg556–Leu589, and Thr636–Val672. Positions Asn212 to Lys228 are enriched in polar residues. A compositionally biased stretch (gly residues) spans Met279–Ser303. 2 stretches are compositionally biased toward polar residues: residues Gln319 to Thr329 and Ser344 to Arg355. Over residues Gln432–Ala447 the composition is skewed to low complexity. Pro residues predominate over residues Pro448–Gln458. Residues Val459–Leu482 are compositionally biased toward low complexity. The span at Ser483–Pro495 shows a compositional bias: pro residues. A compositionally biased stretch (low complexity) spans Gln566–Gln583. Ser645 carries the phosphoserine modification. Lys763 participates in a covalent cross-link: Glycyl lysine isopeptide (Lys-Gly) (interchain with G-Cter in SUMO2). The FCS-type zinc finger occupies Leu791–Lys825. The Zn(2+) site is built by Cys800, Cys803, Cys819, and Cys823. Residues Ala848–Ile928 form a disordered region. The residue at position 898 (Ser898) is a Phosphoserine. Thr922 carries the phosphothreonine modification. An SAM domain is found at Trp940 to Thr1004.

In terms of assembly, homodimer. Component of a PRC1-like complex. Interacts with RNF2 and CBX7. Interacts with PHC2, PHC2 and BMI1.

Its subcellular location is the nucleus. In terms of biological role, component of a Polycomb group (PcG) multiprotein PRC1-like complex, a complex class required to maintain the transcriptionally repressive state of many genes, including Hox genes, throughout development. PcG PRC1 complex acts via chromatin remodeling and modification of histones; it mediates monoubiquitination of histone H2A 'Lys-119', rendering chromatin heritably changed in its expressibility. Required for proper control of cellular levels of GMNN expression. The protein is Polyhomeotic-like protein 1 (PHC1) of Homo sapiens (Human).